We begin with the raw amino-acid sequence, 933 residues long: 2-oxoglutarate dehydrogenase E1 component (933 aa).

It belongs to the alpha-ketoglutarate dehydrogenase family. In terms of assembly, homodimer. Part of the 2-oxoglutarate dehydrogenase (OGDH) complex composed of E1 (2-oxoglutarate dehydrogenase), E2 (dihydrolipoamide succinyltransferase) and E3 (dihydrolipoamide dehydrogenase); the complex contains multiple copies of the three enzymatic components (E1, E2 and E3). Thiamine diphosphate serves as cofactor.

It carries out the reaction N(6)-[(R)-lipoyl]-L-lysyl-[protein] + 2-oxoglutarate + H(+) = N(6)-[(R)-S(8)-succinyldihydrolipoyl]-L-lysyl-[protein] + CO2. In terms of biological role, E1 component of the 2-oxoglutarate dehydrogenase (OGDH) complex which catalyzes the decarboxylation of 2-oxoglutarate, the first step in the conversion of 2-oxoglutarate to succinyl-CoA and CO(2). This chain is 2-oxoglutarate dehydrogenase E1 component (sucA), found in Rickettsia typhi (strain ATCC VR-144 / Wilmington).